Here is a 503-residue protein sequence, read N- to C-terminus: 12-dehydrotetracycline 5-monooxygenase/anhydrotetracycline 6-monooxygenase (503 aa).

Residues threonine 13, glutamate 32 to arginine 33, leucine 44, glutamine 99, valine 123, threonine 160, aspartate 288, and leucine 301 to asparagine 302 contribute to the FAD site.

It belongs to the PheA/TfdB FAD monooxygenase family. As to quaternary structure, monomer. FAD serves as cofactor.

The catalysed reaction is 5a,11a-dehydrotetracycline + NADPH + O2 + H(+) = 5a,11a-dehydrooxytetracycline + NADP(+) + H2O. It catalyses the reaction anhydrotetracycline + NADPH + O2 + H(+) = 5a,11a-dehydrotetracycline + NADP(+) + H2O. It functions in the pathway antibiotic biosynthesis; oxytetracycline biosynthesis. Its function is as follows. Involved in the biosynthesis of the antibiotics oxytetracycline and tetracycline. OxyS starts by catalyzing the stereospecific hydroxylation of anhydrotetracycline at C(6) position to yield 5a,11a-dehydrotetracycline (12-dehydrotetracycline). If the released product is captured by OxyR, it is reduced to tetracycline. However, if the released product is recaptured by OxyS, it performs an additional hydroxylation at C(5), producing 5a,11a-dehydrooxytetracycline, which, following the action of OxyR becomes oxytetracycline. In Streptomyces rimosus subsp. rimosus (strain ATCC 10970 / DSM 40260 / JCM 4667 / NRRL 2234), this protein is 12-dehydrotetracycline 5-monooxygenase/anhydrotetracycline 6-monooxygenase.